Consider the following 507-residue polypeptide: ATP synthase subunit alpha, chloroplastic (507 aa).

Residue 169 to 176 (IGDRQTGK) participates in ATP binding.

Belongs to the ATPase alpha/beta chains family. In terms of assembly, F-type ATPases have 2 components, CF(1) - the catalytic core - and CF(0) - the membrane proton channel. CF(1) has five subunits: alpha(3), beta(3), gamma(1), delta(1), epsilon(1). CF(0) has four main subunits: a, b, b' and c.

It is found in the plastid. Its subcellular location is the chloroplast thylakoid membrane. The enzyme catalyses ATP + H2O + 4 H(+)(in) = ADP + phosphate + 5 H(+)(out). Produces ATP from ADP in the presence of a proton gradient across the membrane. The alpha chain is a regulatory subunit. This is ATP synthase subunit alpha, chloroplastic from Saccharum hybrid (Sugarcane).